Reading from the N-terminus, the 318-residue chain is uncharacterized protein (318 aa).

Belongs to the asfivirus F317L family.

The protein resides in the virion. This is an uncharacterized protein from African swine fever virus (isolate Tick/Malawi/Lil 20-1/1983) (ASFV).